We begin with the raw amino-acid sequence, 174 residues long: Large ribosomal subunit protein uL15 (174 aa).

Disordered regions lie at residues 1–57 (MKLH…QMRI) and 147–174 (PWVV…PQKA). Residues 21 to 35 (RGIGSGKGKTGGKGM) are compositionally biased toward gly residues.

This sequence belongs to the universal ribosomal protein uL15 family. In terms of assembly, part of the 50S ribosomal subunit.

Functionally, binds to the 23S rRNA. This is Large ribosomal subunit protein uL15 from Roseiflexus sp. (strain RS-1).